A 569-amino-acid polypeptide reads, in one-letter code: MTTSWSDRLQNAADLPANMDGHALKKYRREAYHRVFVNRSLAMEKIKCFGFDMDYTLAVYKSPEYESLGFDLTVERLVSIGYPHELLNFVYDPAFPTRGLVFDTHYGNLLKVDAYGNLLVCAHGFNFLRGPETRDQYPNKFIQRDDTDRFYILNTLFNLPETYLLACLVDFFTNCDRYTSCETGFKDGDLFMSFRSMFQDVRDAVDWVHYKGSLKEKTLENLEKYVVKDGKLPLLLSRMNEVGKVFLVTNSDYKYTDKIMTYLFDFPHGPKPGSAHRPWQSYFDLILVDARKPLFFGEGTVLRQVDTVTGKLKIGTYTGPLQHGIVYSGGSSDTVCDLLGAKGKDILYIGDHIFGDILKSKKRQGWRTFLVIPELAQELHVWTDKSALFEELQSLDIFLAELYKHLDSSSNERPDISSIQRRIKKVTHDMDMCYGMMGSLFRSGSRQTLFASQVMRYADLYAASFINLLYYPFSYLFRAAHVLMPHESTVEHTHVDINEKESPMATRNRTSVDFKDSDYKRHQLTRSISEIKPPNLFPQAPQEITHCHDEDDDEEEEEEEVEEEEEEEE.

Asp52 functions as the Nucleophile in the catalytic mechanism. Residues Asp52 and Asp54 each contribute to the IMP site. Positions 52 and 54 each coordinate Mg(2+). The active-site Proton donor is the Asp54. Positions 144 and 154 each coordinate ATP. The IMP site is built by Arg202, Asp206, Lys215, Thr249, Asn250, Ser251, and Lys292. Asp351 contributes to the Mg(2+) binding site. Gln453 and Arg456 together coordinate ATP. A disordered region spans residues 527–569; that stretch reads SISEIKPPNLFPQAPQEITHCHDEDDDEEEEEEEVEEEEEEEE. The tract at residues 548-569 is required for tetramer assembly; that stretch reads HDEDDDEEEEEEEVEEEEEEEE. Over residues 550 to 569 the composition is skewed to acidic residues; the sequence is EDDDEEEEEEEVEEEEEEEE.

The protein belongs to the 5'(3')-deoxyribonucleotidase family. As to quaternary structure, homotetramer. Mg(2+) serves as cofactor.

The protein localises to the cytoplasm. Its subcellular location is the cytosol. The enzyme catalyses a ribonucleoside 5'-phosphate + H2O = a ribonucleoside + phosphate. It catalyses the reaction a 2'-deoxyribonucleoside + a ribonucleoside 5'-phosphate = a ribonucleoside + a 2'-deoxyribonucleoside 5'-phosphate. The catalysed reaction is IMP + H2O = inosine + phosphate. It carries out the reaction GMP + H2O = guanosine + phosphate. The enzyme catalyses dGMP + H2O = 2'-deoxyguanosine + phosphate. It catalyses the reaction dIMP + H2O = 2'-deoxyinosine + phosphate. The catalysed reaction is XMP + H2O = xanthosine + phosphate. It carries out the reaction inosine + GMP = guanosine + IMP. The enzyme catalyses dGMP + inosine = 2'-deoxyguanosine + IMP. It catalyses the reaction dIMP + inosine = 2'-deoxyinosine + IMP. The catalysed reaction is inosine + UMP = uridine + IMP. It carries out the reaction inosine + CMP = cytidine + IMP. The enzyme catalyses inosine + AMP = IMP + adenosine. Allosterically activated by various compounds including ATP, 2,3-BPG/2,3-Bisphosphoglyceric acid and Ap4A/P1,P4-bis(5'-adenosyl) tetraphosphate. Binding of an allosteric activator is a prerequisiste to magnesium and substrate binding. Inhibited by inorganic phosphate. Inhibited by inosine, guanosine, p-chloromercuribenzoate and NaF. In terms of biological role, broad specificity cytosolic 5'-nucleotidase that catalyzes the dephosphorylation of 6-hydroxypurine nucleoside 5'-monophosphates. In addition, possesses a phosphotransferase activity by which it can transfer a phosphate from a donor nucleoside monophosphate to an acceptor nucleoside, preferably inosine, deoxyinosine and guanosine. Has the highest activities for IMP and GMP followed by dIMP, dGMP and XMP. Could also catalyze the transfer of phosphates from pyrimidine monophosphates but with lower efficiency. Through these activities regulates the purine nucleoside/nucleotide pools within the cell. In Gallus gallus (Chicken), this protein is Cytosolic purine 5'-nucleotidase (NT5C2).